Reading from the N-terminus, the 295-residue chain is Pyridoxal 5'-phosphate synthase subunit PdxS (295 aa).

A D-ribose 5-phosphate-binding site is contributed by Asp-25. Residue Lys-82 is the Schiff-base intermediate with D-ribose 5-phosphate of the active site. Gly-154 is a D-ribose 5-phosphate binding site. Arg-166 serves as a coordination point for D-glyceraldehyde 3-phosphate. D-ribose 5-phosphate is bound by residues Gly-215 and 236–237 (GS).

It belongs to the PdxS/SNZ family. In terms of assembly, in the presence of PdxT, forms a dodecamer of heterodimers.

The enzyme catalyses aldehydo-D-ribose 5-phosphate + D-glyceraldehyde 3-phosphate + L-glutamine = pyridoxal 5'-phosphate + L-glutamate + phosphate + 3 H2O + H(+). It functions in the pathway cofactor biosynthesis; pyridoxal 5'-phosphate biosynthesis. Functionally, catalyzes the formation of pyridoxal 5'-phosphate from ribose 5-phosphate (RBP), glyceraldehyde 3-phosphate (G3P) and ammonia. The ammonia is provided by the PdxT subunit. Can also use ribulose 5-phosphate and dihydroxyacetone phosphate as substrates, resulting from enzyme-catalyzed isomerization of RBP and G3P, respectively. The sequence is that of Pyridoxal 5'-phosphate synthase subunit PdxS from Actinobacillus pleuropneumoniae serotype 3 (strain JL03).